A 398-amino-acid chain; its full sequence is 1-deoxy-D-xylulose 5-phosphate reductoisomerase (398 aa).

NADPH is bound by residues Thr-11, Gly-12, Ser-13, Ile-14, and Asn-125. Residue Lys-126 participates in 1-deoxy-D-xylulose 5-phosphate binding. An NADPH-binding site is contributed by Glu-127. Residue Asp-151 coordinates Mn(2+). Residues Ser-152, Glu-153, Ser-186, and His-209 each contribute to the 1-deoxy-D-xylulose 5-phosphate site. Glu-153 serves as a coordination point for Mn(2+). Residue Gly-215 participates in NADPH binding. 1-deoxy-D-xylulose 5-phosphate is bound by residues Ser-222, Asn-227, Lys-228, and Glu-231. Position 231 (Glu-231) interacts with Mn(2+).

The protein belongs to the DXR family. The cofactor is Mg(2+). Mn(2+) is required as a cofactor.

It catalyses the reaction 2-C-methyl-D-erythritol 4-phosphate + NADP(+) = 1-deoxy-D-xylulose 5-phosphate + NADPH + H(+). Its pathway is isoprenoid biosynthesis; isopentenyl diphosphate biosynthesis via DXP pathway; isopentenyl diphosphate from 1-deoxy-D-xylulose 5-phosphate: step 1/6. Its function is as follows. Catalyzes the NADPH-dependent rearrangement and reduction of 1-deoxy-D-xylulose-5-phosphate (DXP) to 2-C-methyl-D-erythritol 4-phosphate (MEP). This is 1-deoxy-D-xylulose 5-phosphate reductoisomerase from Acinetobacter baumannii (strain ATCC 17978 / DSM 105126 / CIP 53.77 / LMG 1025 / NCDC KC755 / 5377).